Reading from the N-terminus, the 273-residue chain is Dermonecrotic toxin LapSicTox-alphaIB1b3 (273 aa).

His5 is a catalytic residue. Mg(2+)-binding residues include Glu25 and Asp27. The active-site Nucleophile is the His41. Intrachain disulfides connect Cys45-Cys51 and Cys47-Cys190. Asp85 is a Mg(2+) binding site. Asn250 is a glycosylation site (N-linked (GlcNAc...) asparagine).

Belongs to the arthropod phospholipase D family. Class II subfamily. Requires Mg(2+) as cofactor. In terms of tissue distribution, expressed by the venom gland.

It is found in the secreted. The catalysed reaction is an N-(acyl)-sphingosylphosphocholine = an N-(acyl)-sphingosyl-1,3-cyclic phosphate + choline. It carries out the reaction an N-(acyl)-sphingosylphosphoethanolamine = an N-(acyl)-sphingosyl-1,3-cyclic phosphate + ethanolamine. The enzyme catalyses a 1-acyl-sn-glycero-3-phosphocholine = a 1-acyl-sn-glycero-2,3-cyclic phosphate + choline. It catalyses the reaction a 1-acyl-sn-glycero-3-phosphoethanolamine = a 1-acyl-sn-glycero-2,3-cyclic phosphate + ethanolamine. Its function is as follows. Dermonecrotic toxins cleave the phosphodiester linkage between the phosphate and headgroup of certain phospholipids (sphingolipid and lysolipid substrates), forming an alcohol (often choline) and a cyclic phosphate. This toxin acts on sphingomyelin (SM). It may also act on ceramide phosphoethanolamine (CPE), lysophosphatidylcholine (LPC) and lysophosphatidylethanolamine (LPE), but not on lysophosphatidylserine (LPS), and lysophosphatidylglycerol (LPG). It acts by transphosphatidylation, releasing exclusively cyclic phosphate products as second products. Induces dermonecrosis, hemolysis, increased vascular permeability, edema, inflammatory response, and platelet aggregation. This is Dermonecrotic toxin LapSicTox-alphaIB1b3 from Loxosceles apachea (Apache recluse spider).